Here is a 246-residue protein sequence, read N- to C-terminus: Small ribosomal subunit protein uS3A (246 aa).

In terms of domain architecture, KH type-2 spans 21–92 (LNEFLTRELA…SVELYAEKVA (72 aa)). The disordered stretch occupies residues 215–246 (DEIVPTTPISEQKAAKPDQPQPPAMPQPVATA).

This sequence belongs to the universal ribosomal protein uS3 family.

Its subcellular location is the cytoplasm. It is found in the nucleus. The protein resides in the nucleolus. It localises to the mitochondrion inner membrane. The protein localises to the cytoskeleton. Its subcellular location is the spindle. The enzyme catalyses 2'-deoxyribonucleotide-(2'-deoxyribose 5'-phosphate)-2'-deoxyribonucleotide-DNA = a 3'-end 2'-deoxyribonucleotide-(2,3-dehydro-2,3-deoxyribose 5'-phosphate)-DNA + a 5'-end 5'-phospho-2'-deoxyribonucleoside-DNA + H(+). In terms of biological role, component of the small ribosomal subunit. The ribosome is a large ribonucleoprotein complex responsible for the synthesis of proteins in the cell. Has endonuclease activity and plays a role in repair of damaged DNA. Also involved in other processes including regulation of transcription, translation of its cognate mRNA, spindle formation and chromosome movement during mitosis, and apoptosis. The protein is Small ribosomal subunit protein uS3A (rps3-a) of Xenopus laevis (African clawed frog).